A 156-amino-acid chain; its full sequence is MPRKGSVPKRDVLPDPIHNSKLVTKLINKIMLDGKRGTAQRILYSAFDIVQERSGRDAIEVFEEAINNIMPVLEVKARRVGGSNYQVPVEVRPERRTTLGLRWLVNYSRLRGEKTMEERLANEILDAANNTGGAVKKREDTHKMAEANKAFAHYRW.

The protein belongs to the universal ribosomal protein uS7 family. As to quaternary structure, part of the 30S ribosomal subunit. Contacts proteins S9 and S11.

One of the primary rRNA binding proteins, it binds directly to 16S rRNA where it nucleates assembly of the head domain of the 30S subunit. Is located at the subunit interface close to the decoding center, probably blocks exit of the E-site tRNA. The polypeptide is Small ribosomal subunit protein uS7 (Staphylococcus carnosus (strain TM300)).